The sequence spans 215 residues: Ribonuclease T (215 aa).

One can recognise an Exonuclease domain in the interval 20-194 (VVIDVETAGF…YDTERTAVLF (175 aa)). Positions 23, 25, 181, and 186 each coordinate Mg(2+). Histidine 181 functions as the Proton donor/acceptor in the catalytic mechanism.

The protein belongs to the RNase T family. Homodimer. Mg(2+) is required as a cofactor.

Its function is as follows. Trims short 3' overhangs of a variety of RNA species, leaving a one or two nucleotide 3' overhang. Responsible for the end-turnover of tRNA: specifically removes the terminal AMP residue from uncharged tRNA (tRNA-C-C-A). Also appears to be involved in tRNA biosynthesis. The sequence is that of Ribonuclease T from Shigella dysenteriae serotype 1 (strain Sd197).